Reading from the N-terminus, the 310-residue chain is Tagatose-6-phosphate kinase (310 aa).

It belongs to the carbohydrate kinase PfkB family. LacC subfamily.

The enzyme catalyses D-tagatofuranose 6-phosphate + ATP = D-tagatofuranose 1,6-bisphosphate + ADP + H(+). Its pathway is carbohydrate metabolism; D-tagatose 6-phosphate degradation; D-glyceraldehyde 3-phosphate and glycerone phosphate from D-tagatose 6-phosphate: step 1/2. This chain is Tagatose-6-phosphate kinase, found in Streptococcus agalactiae serotype Ia (strain ATCC 27591 / A909 / CDC SS700).